We begin with the raw amino-acid sequence, 289 residues long: GTPase Era (289 aa).

The Era-type G domain maps to 2–167; that stretch reads KSGFVSLIGR…LREIAKLLPE (166 aa). The segment at 10-17 is G1; that stretch reads GRTNAGKS. Residue 10-17 participates in GTP binding; that stretch reads GRTNAGKS. Positions 36–40 are G2; the sequence is NATRR. The tract at residues 57-60 is G3; that stretch reads DTPG. GTP contacts are provided by residues 57-61 and 116-119; these read DTPGL and TKTD. The tract at residues 116 to 119 is G4; it reads TKTD. The segment at 146–148 is G5; that stretch reads VNI. Positions 186-274 constitute a KH type-2 domain; the sequence is YRDFILESVY…HLNLQIFVKK (89 aa).

Belongs to the TRAFAC class TrmE-Era-EngA-EngB-Septin-like GTPase superfamily. Era GTPase family. As to quaternary structure, monomer.

It localises to the cytoplasm. The protein localises to the cell inner membrane. Its function is as follows. An essential GTPase that binds both GDP and GTP, with rapid nucleotide exchange. Plays a role in 16S rRNA processing and 30S ribosomal subunit biogenesis and possibly also in cell cycle regulation and energy metabolism. The sequence is that of GTPase Era from Campylobacter hominis (strain ATCC BAA-381 / DSM 21671 / CCUG 45161 / LMG 19568 / NCTC 13146 / CH001A).